Reading from the N-terminus, the 376-residue chain is Cell adhesion molecule CEACAM18 (376 aa).

Positions 1 to 30 (MDFSRPSFSPWRWLTLVASLLTCGICQASG) are cleaved as a signal peptide. At 31–330 (QIFISPDSLL…PLPTVNRELY (300 aa)) the chain is on the extracellular side. N69, N95, and N110 each carry an N-linked (GlcNAc...) asparagine glycan. The Ig-like C2-type domain occupies 229–314 (PDYVSLWTQP…TQLTFYRDVT (86 aa)). A disulfide bond links C257 and C298. Residues 331–351 (IPGPLVIFLILLTSLGGAFVC) form a helical membrane-spanning segment. Residues 352–376 (RVLVYSLFQSCSRGKTCHKCPWQTN) are Cytoplasmic-facing.

This sequence belongs to the immunoglobulin superfamily. CEA family. As to expression, mostly expressed in the small and large intestine and at lower levels also in other organs.

It localises to the membrane. The sequence is that of Cell adhesion molecule CEACAM18 from Mus musculus (Mouse).